A 386-amino-acid polypeptide reads, in one-letter code: Putative gustatory receptor 92a (386 aa).

At 1 to 14 (MFEFLHQMSAPKLS) the chain is on the cytoplasmic side. A helical membrane pass occupies residues 15–35 (TSILRYIFRYAQFIGVIFFCL). The Extracellular portion of the chain corresponds to 36–79 (HTRKDDKTVFIRNWLKWLNVTHRIITFTRFFWVYIASISIKTNR). N-linked (GlcNAc...) asparagine glycosylation is present at asparagine 54. Residues 80–100 (VLQVLHGMRLVLSIPNVAVIL) form a helical membrane-spanning segment. The Cytoplasmic segment spans residues 101–141 (CYHIFRGPEIIDLINQFLRLFRQVSDLFKTKTPGFGGRREL). A helical transmembrane segment spans residues 142–162 (ILILLNLISFAHEQTYLWFTI). Residues 163 to 169 (RKGFSWR) lie on the Extracellular side of the membrane. Residues 170-190 (FLIDWWCDFYLVSATNIFIHI) form a helical membrane-spanning segment. The Cytoplasmic portion of the chain corresponds to 191-256 (NSIGYLSLGV…YHTSIMFHKL (66 aa)). A helical transmembrane segment spans residues 257–277 (FVPLLFLALIYKVLLIALIGF). The Extracellular portion of the chain corresponds to 278 to 287 (NVAVEFYLNS). The helical transmembrane segment at 288–308 (FIFWILLGKHVLDLFLVTVSV) threads the bilayer. The Cytoplasmic portion of the chain corresponds to 309-356 (EGAVNQFLNIGMQFGNVGDLSKFQTTLDTLFLHLRLGHFRVSILGLFD). A helical membrane pass occupies residues 357 to 377 (VTQMQYLQFLSALLSGLAFIA). The Extracellular portion of the chain corresponds to 378-386 (QYRMQVGNG).

It belongs to the insect chemoreceptor superfamily. Gustatory receptor (GR) family. Gr93a subfamily.

It localises to the cell membrane. Probable gustatory receptor which mediates acceptance or avoidance behavior, depending on its substrates. This Drosophila melanogaster (Fruit fly) protein is Putative gustatory receptor 92a (Gr92a).